Here is a 251-residue protein sequence, read N- to C-terminus: Guanine nucleotide-binding protein subunit gamma 3 (251 aa).

Gly residues predominate over residues 1–10; the sequence is MSAPSGGGEG. A disordered region spans residues 1–44; it reads MSAPSGGGEGGGKESAAGGVSSSSLAPSSLPPPRPKSPPEYPDL. Positions 14-28 are enriched in low complexity; sequence ESAAGGVSSSSLAPS. Over residues 29–41 the composition is skewed to pro residues; the sequence is SLPPPRPKSPPEY. Residues 46-126 enclose the G protein gamma domain; the sequence is GKRREAARVQ…LSLVSFCCCC (81 aa). Cysteine methyl ester is present on C248. C248 is lipidated: S-farnesyl cysteine. A propeptide spans 249 to 251 (removed in mature form); the sequence is LAF.

In terms of assembly, g proteins are composed of 3 units, alpha, beta and gamma. Expressed in flowers and siliques.

Its function is as follows. Guanine nucleotide-binding proteins (G proteins) are involved as a modulator or transducer in various transmembrane signaling systems. The beta and gamma chains are required for the GTPase activity, for replacement of GDP by GTP, and for G protein-effector interaction. This is Guanine nucleotide-binding protein subunit gamma 3 (GG3) from Arabidopsis thaliana (Mouse-ear cress).